The sequence spans 424 residues: Kynureninase (424 aa).

Pyridoxal 5'-phosphate contacts are provided by residues L105, S106, 133–136 (FPTD), D218, H221, and Y243. The residue at position 244 (K244) is an N6-(pyridoxal phosphate)lysine. 2 residues coordinate pyridoxal 5'-phosphate: W274 and N302.

Belongs to the kynureninase family. As to quaternary structure, homodimer. It depends on pyridoxal 5'-phosphate as a cofactor.

The catalysed reaction is L-kynurenine + H2O = anthranilate + L-alanine + H(+). The enzyme catalyses 3-hydroxy-L-kynurenine + H2O = 3-hydroxyanthranilate + L-alanine + H(+). It participates in amino-acid degradation; L-kynurenine degradation; L-alanine and anthranilate from L-kynurenine: step 1/1. The protein operates within cofactor biosynthesis; NAD(+) biosynthesis; quinolinate from L-kynurenine: step 2/3. In terms of biological role, catalyzes the cleavage of L-kynurenine (L-Kyn) and L-3-hydroxykynurenine (L-3OHKyn) into anthranilic acid (AA) and 3-hydroxyanthranilic acid (3-OHAA), respectively. This is Kynureninase from Stenotrophomonas maltophilia (strain K279a).